We begin with the raw amino-acid sequence, 1182 residues long: Lysine-specific demethylase hairless (1182 aa).

Disordered stretches follow at residues 227-257, 302-380, 411-443, and 507-546; these read LGLAPGGHLQQACESEGPSLHQRDGETGAGR, YQLG…KKTW, AGSPEVQGASRGPAPKRPSHPFPGTGRQGARAW, and TGHSQKSRRSPLEEKQLEEEDSSATSEEGGGGPGPEASLN. Over residues 307–321 the composition is skewed to pro residues; sequence PATPRCPSPGPPTPP. Positions 561–565 match the LXXLL motif 1 motif; that stretch reads LCRLL. Residues 595–620 form a C6-type zinc finger; sequence CSRCHHGLFNTHWRCSHCSHRLCVAC. A disordered region spans residues 697–746; the sequence is GDGGQQKEPTEKTPPTPQPSCNGDSNRTKDIKEETPDSTESPAEDGAGRS. Residues 722–731 are compositionally biased toward basic and acidic residues; it reads NRTKDIKEET. The short motif at 753-757 is the LXXLL motif 2 element; that stretch reads LCELL. The JmjC domain maps to 939–1150; that stretch reads DASRVQNLAS…LSAQLYHQGA (212 aa). Cys1000, Glu1002, and His1118 together coordinate Fe cation.

Fe(2+) serves as cofactor. In terms of tissue distribution, expressed predominantly in brain, hair follicles and interfollicular epidermis. No expression in dermis.

It is found in the nucleus. The enzyme catalyses N(6),N(6)-dimethyl-L-lysyl(9)-[histone H3] + 2 2-oxoglutarate + 2 O2 = L-lysyl(9)-[histone H3] + 2 formaldehyde + 2 succinate + 2 CO2. Histone demethylase that specifically demethylates both mono- and dimethylated 'Lys-9' of histone H3. May act as a transcription regulator controlling hair biology (via targeting of collagens), neural activity, and cell cycle. This chain is Lysine-specific demethylase hairless (Hr), found in Mus musculus (Mouse).